The sequence spans 704 residues: Elongation factor G (704 aa).

In terms of domain architecture, tr-type G spans Ala-8–Val-290. Residues Ala-17–Thr-24, Asp-88–His-92, and Asn-142–Asp-145 contribute to the GTP site.

It belongs to the TRAFAC class translation factor GTPase superfamily. Classic translation factor GTPase family. EF-G/EF-2 subfamily.

The protein localises to the cytoplasm. Catalyzes the GTP-dependent ribosomal translocation step during translation elongation. During this step, the ribosome changes from the pre-translocational (PRE) to the post-translocational (POST) state as the newly formed A-site-bound peptidyl-tRNA and P-site-bound deacylated tRNA move to the P and E sites, respectively. Catalyzes the coordinated movement of the two tRNA molecules, the mRNA and conformational changes in the ribosome. This chain is Elongation factor G, found in Salmonella agona (strain SL483).